The sequence spans 303 residues: Shikimate kinase 1, chloroplastic (303 aa).

A chloroplast-targeting transit peptide spans 1 to 66; sequence MEAAITQRIQ…QRRAVSPAVS (66 aa). 109 to 116 is a binding site for ATP; the sequence is GMMGSGKT. Threonine 116 serves as a coordination point for Mg(2+). Substrate-binding residues include aspartate 134, arginine 159, and glycine 181. Arginine 220 contacts ATP.

Belongs to the shikimate kinase family. In terms of assembly, homodimer. The cofactor is Mg(2+).

Its subcellular location is the plastid. It localises to the chloroplast. The enzyme catalyses shikimate + ATP = 3-phosphoshikimate + ADP + H(+). The protein operates within metabolic intermediate biosynthesis; chorismate biosynthesis; chorismate from D-erythrose 4-phosphate and phosphoenolpyruvate: step 5/7. Its function is as follows. Catalyzes the specific phosphorylation of the 3-hydroxyl group of shikimic acid using ATP as a cosubstrate. The sequence is that of Shikimate kinase 1, chloroplastic (SK1) from Arabidopsis thaliana (Mouse-ear cress).